The sequence spans 206 residues: LexA repressor (206 aa).

Residues 28-48 (RAEIARELGFRSANAAEEHLK) constitute a DNA-binding region (H-T-H motif). Active-site for autocatalytic cleavage activity residues include Ser-123 and Lys-160.

It belongs to the peptidase S24 family. Homodimer.

The enzyme catalyses Hydrolysis of Ala-|-Gly bond in repressor LexA.. Represses a number of genes involved in the response to DNA damage (SOS response), including recA and lexA. In the presence of single-stranded DNA, RecA interacts with LexA causing an autocatalytic cleavage which disrupts the DNA-binding part of LexA, leading to derepression of the SOS regulon and eventually DNA repair. The protein is LexA repressor of Vibrio atlanticus (strain LGP32) (Vibrio splendidus (strain Mel32)).